A 175-amino-acid chain; its full sequence is Protein her-1 (175 aa).

An N-terminal signal peptide occupies residues 1–18 (MRYLPIFVFLGSFGYTET). N-linked (GlcNAc...) asparagine glycosylation is found at N98 and N163.

It localises to the secreted. Functionally, dictates male development. Probably plays a direct role in cell signaling during C.elegans sex determination. Inhibits the function of tra-2a. This Caenorhabditis elegans protein is Protein her-1 (her-1).